A 147-amino-acid chain; its full sequence is Peptide deformylase (147 aa).

Fe cation is bound by residues Cys88 and His130. Glu131 is an active-site residue. Residue His134 coordinates Fe cation.

Belongs to the polypeptide deformylase family. Fe(2+) is required as a cofactor.

The catalysed reaction is N-terminal N-formyl-L-methionyl-[peptide] + H2O = N-terminal L-methionyl-[peptide] + formate. In terms of biological role, removes the formyl group from the N-terminal Met of newly synthesized proteins. Requires at least a dipeptide for an efficient rate of reaction. N-terminal L-methionine is a prerequisite for activity but the enzyme has broad specificity at other positions. The polypeptide is Peptide deformylase (Clostridium botulinum (strain Alaska E43 / Type E3)).